The sequence spans 475 residues: Ribulose bisphosphate carboxylase large chain (475 aa).

The propeptide occupies 1-2; the sequence is MS. Position 3 is an N-acetylproline (P3). The residue at position 14 (K14) is an N6,N6,N6-trimethyllysine. Substrate-binding residues include N123 and T173. K175 serves as the catalytic Proton acceptor. K177 lines the substrate pocket. Positions 201, 203, and 204 each coordinate Mg(2+). Residue K201 is modified to N6-carboxylysine. H294 serves as the catalytic Proton acceptor. The substrate site is built by R295, H327, and S379.

The protein belongs to the RuBisCO large chain family. Type I subfamily. As to quaternary structure, heterohexadecamer of 8 large chains and 8 small chains; disulfide-linked. The disulfide link is formed within the large subunit homodimers. The cofactor is Mg(2+). The disulfide bond which can form in the large chain dimeric partners within the hexadecamer appears to be associated with oxidative stress and protein turnover.

It is found in the plastid. The protein resides in the chloroplast. It catalyses the reaction 2 (2R)-3-phosphoglycerate + 2 H(+) = D-ribulose 1,5-bisphosphate + CO2 + H2O. The catalysed reaction is D-ribulose 1,5-bisphosphate + O2 = 2-phosphoglycolate + (2R)-3-phosphoglycerate + 2 H(+). In terms of biological role, ruBisCO catalyzes two reactions: the carboxylation of D-ribulose 1,5-bisphosphate, the primary event in carbon dioxide fixation, as well as the oxidative fragmentation of the pentose substrate in the photorespiration process. Both reactions occur simultaneously and in competition at the same active site. The protein is Ribulose bisphosphate carboxylase large chain of Pinus balfouriana (Foxtail pine).